Consider the following 720-residue polypeptide: Beta-glucan synthesis-associated protein KRE6 (720 aa).

3 stretches are compositionally biased toward polar residues: residues 1-17, 31-51, and 69-90; these read MPLR…STNL, LSSS…NAGL, and SLSS…HDNS. Positions 1–90 are disordered; the sequence is MPLRNLTETH…SDSSLLHDNS (90 aa). Over 1-252 the chain is Cytoplasmic; that stretch reads MPLRNLTETH…KYMDKRSASG (252 aa). 6 positions are modified to phosphoserine: Ser81, Ser116, Ser133, Ser134, Ser136, and Ser139. 2 disordered regions span residues 117–142 and 167–189; these read TAND…SNLS and QLNH…SFSS. A compositionally biased stretch (low complexity) spans 133–142; it reads SSPSLNSNLS. Residues 253-273 traverse the membrane as a helical; Signal-anchor for type II membrane protein segment; it reads LAGVLLLFLAAIFIFIVLPAL. At 274 to 720 the chain is on the lumenal side; sequence TFTGAIDHES…CTSSKFKLSS (447 aa). The 376-residue stretch at 289 to 664 folds into the GH16 domain; that stretch reads TYLTQYQYPQ…YVRIYQPSNA (376 aa). Asn374, Asn461, Asn538, Asn563, and Asn691 each carry an N-linked (GlcNAc...) asparagine glycan.

The protein belongs to the SKN1/KRE6 family. The cytoplasmic domain interacts with the actin patch assembly proteins LAS17 and SLA1. Interacts with KEG1.

It is found in the golgi apparatus membrane. Functionally, involved in the synthesis of (1-&gt;6)- and (1-&gt;3)-beta-D-glucan polymers of the yeast cell wall in vivo. It is required for full activity of beta-glucan synthase in vitro. May be involved in the maturation and transport of cell wall proteins (CWP) to the cell wall. May act as a transglucosidase and contribute to the construction of a protein-bound glucan-structure that acts as an acceptor site for the addition of (1-&gt;6)-beta-D-glucan at the cell surface. This is Beta-glucan synthesis-associated protein KRE6 (KRE6) from Saccharomyces cerevisiae (strain ATCC 204508 / S288c) (Baker's yeast).